The following is a 494-amino-acid chain: Glucose-6-phosphate exchanger SLC37A2 (494 aa).

The chain crosses the membrane as a helical span at residues 20 to 37 (YRFSILFLTFVFYTSYHL). Asn52, Asn63, and Asn67 each carry an N-linked (GlcNAc...) asparagine glycan. Transmembrane regions (helical) follow at residues 85 to 105 (FGVL…FSGI), 116 to 136 (LSTG…GFYW), 146 to 166 (LVQA…VACV), 187 to 207 (SVGN…AWGL), 208 to 228 (SFIV…LFLV), 295 to 315 (LCLL…PLYI), 327 to 347 (GDLS…AGLV), 355 to 375 (ASTC…YNKI), 384 to 404 (VGML…ITTA), 427 to 447 (AIID…AGLI), and 455 to 475 (VFYM…RLVY).

This sequence belongs to the major facilitator superfamily. Organophosphate:Pi antiporter (OPA) (TC 2.A.1.4) family.

Its subcellular location is the endoplasmic reticulum membrane. It carries out the reaction D-glucose 6-phosphate(in) + phosphate(out) = D-glucose 6-phosphate(out) + phosphate(in). Its function is as follows. Inorganic phosphate and glucose-6-phosphate antiporter. May transport cytoplasmic glucose-6-phosphate into the lumen of the endoplasmic reticulum and translocate inorganic phosphate into the opposite direction. This is Glucose-6-phosphate exchanger SLC37A2 from Danio rerio (Zebrafish).